The sequence spans 628 residues: Serine/threonine-protein phosphatase 2A regulatory subunit psrA (628 aa).

Over residues 1–22 (MKNDHINYQQNLSQSPILNSNK) the composition is skewed to polar residues. Disordered stretches follow at residues 1 to 61 (MKND…QIPF), 500 to 558 (KKKQ…DKPS), and 577 to 628 (SSHR…YTFT). Low complexity-rich tracts occupy residues 23 to 58 (NQTQ…SPQQ) and 524 to 547 (QINQ…NNNN). The span at 600-618 (NNHTNHDSEIENEVKEDFR) shows a compositional bias: basic and acidic residues.

This sequence belongs to the phosphatase 2A regulatory subunit B56 family. As to quaternary structure, PP2A consists of a trimeric holoenzyme, composed of a 37 kDa catalytic subunit (C subunit) and a 65 kDa constant regulatory subunit (A subunit), that associates with a variety of regulatory subunits (B subunit) such as phr2AB (B55) and psrA (B56 homolog). The trimer may partially dissociates into a core 'AC' dimer equally active compared to the trimer. Seems to play a role in proper anterior patterning (pstO and pstAB).

It is found in the cytoplasm. The protein resides in the cytosol. In terms of biological role, involved in developmental cell fate decision. The polypeptide is Serine/threonine-protein phosphatase 2A regulatory subunit psrA (psrA) (Dictyostelium discoideum (Social amoeba)).